A 364-amino-acid chain; its full sequence is tRNA-specific 2-thiouridylase MnmA (364 aa).

Residues 6 to 13 (AMSGGVDS) and Leu32 each bind ATP. The Nucleophile role is filled by Cys101. The cysteines at positions 101 and 193 are disulfide-linked. Residue Gly125 participates in ATP binding. An interaction with tRNA region spans residues 143-145 (KDQ). Cys193 acts as the Cysteine persulfide intermediate in catalysis.

Belongs to the MnmA/TRMU family.

It is found in the cytoplasm. It carries out the reaction S-sulfanyl-L-cysteinyl-[protein] + uridine(34) in tRNA + AH2 + ATP = 2-thiouridine(34) in tRNA + L-cysteinyl-[protein] + A + AMP + diphosphate + H(+). Functionally, catalyzes the 2-thiolation of uridine at the wobble position (U34) of tRNA, leading to the formation of s(2)U34. This chain is tRNA-specific 2-thiouridylase MnmA, found in Rhodococcus opacus (strain B4).